Reading from the N-terminus, the 307-residue chain is Protein phosphatase PTC7 homolog fig (307 aa).

The PPM-type phosphatase domain occupies 41–300; sequence VQGSSKDQQL…DDITVILASV (260 aa). Residues Asp-77, Gly-78, and Asp-222 each contribute to the Mn(2+) site.

This sequence belongs to the PP2C family. Requires Mg(2+) as cofactor. The cofactor is Mn(2+).

The enzyme catalyses O-phospho-L-seryl-[protein] + H2O = L-seryl-[protein] + phosphate. It carries out the reaction O-phospho-L-threonyl-[protein] + H2O = L-threonyl-[protein] + phosphate. This Drosophila grimshawi (Hawaiian fruit fly) protein is Protein phosphatase PTC7 homolog fig.